We begin with the raw amino-acid sequence, 184 residues long: Endoribonuclease YbeY (184 aa).

The Zn(2+) site is built by histidine 146, histidine 150, and histidine 156.

This sequence belongs to the endoribonuclease YbeY family. The cofactor is Zn(2+).

Its subcellular location is the cytoplasm. Its function is as follows. Single strand-specific metallo-endoribonuclease involved in late-stage 70S ribosome quality control and in maturation of the 3' terminus of the 16S rRNA. This is Endoribonuclease YbeY from Nostoc sp. (strain PCC 7120 / SAG 25.82 / UTEX 2576).